A 307-amino-acid chain; its full sequence is MGVTIEKLIKDFSLEVIQTGEENVPINVSDVNRPGLQLAGFYNYFAPERIQVIGKAEWSFLEDMSPDLRKKRLNKFFSFDISCLIITRGLEIHEELLKAARKRNLWILRSDMVTTKFISKITMYLSDKMAPETRLHGVLVDVYGIGMLITGESGIGKSETALELIKRGHRLVTDDAVDIKEIDGDLIGRSPEITFGMLEVRGMGIIDVSALYGLSSILNSKQIKIIIHFEHWKDDGDYDRLGVNDEYQDILGVKVKKLRVPIRPGRNIAVIIEAAAANYRYQRMSDISPVDIIEKRMLESMEKESKI.

Residues His-136 and Lys-157 contribute to the active site. An ATP-binding site is contributed by 151 to 158; sequence GESGIGKS. Ser-158 contacts Mg(2+). Asp-175 acts as the Proton acceptor; for phosphorylation activity. Proton donor; for dephosphorylation activity in catalysis. An important for the catalytic mechanism of both phosphorylation and dephosphorylation region spans residues 198–207; sequence LEVRGMGIID. Glu-199 provides a ligand contact to Mg(2+). Residue Arg-240 is part of the active site. An important for the catalytic mechanism of dephosphorylation region spans residues 261–266; the sequence is PIRPGR.

It belongs to the HPrK/P family. As to quaternary structure, homohexamer. The cofactor is Mg(2+).

It carries out the reaction [HPr protein]-L-serine + ATP = [HPr protein]-O-phospho-L-serine + ADP + H(+). It catalyses the reaction [HPr protein]-O-phospho-L-serine + phosphate + H(+) = [HPr protein]-L-serine + diphosphate. In terms of biological role, catalyzes the ATP- as well as the pyrophosphate-dependent phosphorylation of a specific serine residue in HPr, a phosphocarrier protein of the phosphoenolpyruvate-dependent sugar phosphotransferase system (PTS). HprK/P also catalyzes the pyrophosphate-producing, inorganic phosphate-dependent dephosphorylation (phosphorolysis) of seryl-phosphorylated HPr (P-Ser-HPr). The two antagonistic activities of HprK/P are regulated by several intracellular metabolites, which change their concentration in response to the absence or presence of rapidly metabolisable carbon sources (glucose, fructose, etc.) in the growth medium. Therefore, by controlling the phosphorylation state of HPr, HPrK/P is a sensor enzyme that plays a major role in the regulation of carbon metabolism and sugar transport: it mediates carbon catabolite repression (CCR), and regulates PTS-catalyzed carbohydrate uptake and inducer exclusion. The polypeptide is HPr kinase/phosphorylase (Clostridium perfringens (strain ATCC 13124 / DSM 756 / JCM 1290 / NCIMB 6125 / NCTC 8237 / Type A)).